The following is a 150-amino-acid chain: Aspartate 1-decarboxylase (150 aa).

The active-site Schiff-base intermediate with substrate; via pyruvic acid is Ser-25. Position 25 is a pyruvic acid (Ser) (Ser-25). Residue Thr-57 participates in substrate binding. Residue Tyr-58 is the Proton donor of the active site. Substrate is bound at residue 73-75 (GAA).

This sequence belongs to the PanD family. In terms of assembly, heterooctamer of four alpha and four beta subunits. The cofactor is pyruvate. Post-translationally, is synthesized initially as an inactive proenzyme, which is activated by self-cleavage at a specific serine bond to produce a beta-subunit with a hydroxyl group at its C-terminus and an alpha-subunit with a pyruvoyl group at its N-terminus.

It localises to the cytoplasm. It carries out the reaction L-aspartate + H(+) = beta-alanine + CO2. It participates in cofactor biosynthesis; (R)-pantothenate biosynthesis; beta-alanine from L-aspartate: step 1/1. Its function is as follows. Catalyzes the pyruvoyl-dependent decarboxylation of aspartate to produce beta-alanine. In Kocuria rhizophila (strain ATCC 9341 / DSM 348 / NBRC 103217 / DC2201), this protein is Aspartate 1-decarboxylase.